A 668-amino-acid polypeptide reads, in one-letter code: DNA ligase (668 aa).

Residues 32 to 36, 81 to 82, and glutamate 111 each bind NAD(+); these read DVEYD and SL. Lysine 113 (N6-AMP-lysine intermediate) is an active-site residue. NAD(+) is bound by residues arginine 134, glutamate 171, lysine 290, and lysine 314. Cysteine 408, cysteine 411, cysteine 426, and cysteine 432 together coordinate Zn(2+). Positions 591 to 668 constitute a BRCT domain; sequence EEDLSLKGQT…DEEALIAILS (78 aa).

Belongs to the NAD-dependent DNA ligase family. LigA subfamily. It depends on Mg(2+) as a cofactor. The cofactor is Mn(2+).

It carries out the reaction NAD(+) + (deoxyribonucleotide)n-3'-hydroxyl + 5'-phospho-(deoxyribonucleotide)m = (deoxyribonucleotide)n+m + AMP + beta-nicotinamide D-nucleotide.. Functionally, DNA ligase that catalyzes the formation of phosphodiester linkages between 5'-phosphoryl and 3'-hydroxyl groups in double-stranded DNA using NAD as a coenzyme and as the energy source for the reaction. It is essential for DNA replication and repair of damaged DNA. The sequence is that of DNA ligase from Shewanella piezotolerans (strain WP3 / JCM 13877).